A 303-amino-acid chain; its full sequence is Ferrochelatase (303 aa).

2 residues coordinate Fe cation: His-185 and Glu-262.

The protein belongs to the ferrochelatase family.

It localises to the cytoplasm. The enzyme catalyses heme b + 2 H(+) = protoporphyrin IX + Fe(2+). The protein operates within porphyrin-containing compound metabolism; protoheme biosynthesis; protoheme from protoporphyrin-IX: step 1/1. Its function is as follows. Catalyzes the ferrous insertion into protoporphyrin IX. The polypeptide is Ferrochelatase (Campylobacter jejuni (strain RM1221)).